The following is a 504-amino-acid chain: AMP phosphorylase (504 aa).

Residues glycine 169, 195-200 (SRAITS), and threonine 204 contribute to the AMP site. The active-site Proton donor is the aspartate 257. AMP contacts are provided by serine 265 and lysine 289.

This sequence belongs to the thymidine/pyrimidine-nucleoside phosphorylase family. Type 2 subfamily.

The catalysed reaction is AMP + phosphate = alpha-D-ribose 1,5-bisphosphate + adenine. The enzyme catalyses CMP + phosphate = cytosine + alpha-D-ribose 1,5-bisphosphate. It carries out the reaction UMP + phosphate = alpha-D-ribose 1,5-bisphosphate + uracil. Its function is as follows. Catalyzes the conversion of AMP and phosphate to adenine and ribose 1,5-bisphosphate (R15P). Exhibits phosphorylase activity toward CMP and UMP in addition to AMP. Functions in an archaeal AMP degradation pathway, together with R15P isomerase and RubisCO. This chain is AMP phosphorylase, found in Methanococcus aeolicus (strain ATCC BAA-1280 / DSM 17508 / OCM 812 / Nankai-3).